Reading from the N-terminus, the 156-residue chain is Small ribosomal subunit protein uS7 (156 aa).

This sequence belongs to the universal ribosomal protein uS7 family. Part of the 30S ribosomal subunit. Contacts proteins S9 and S11.

Its function is as follows. One of the primary rRNA binding proteins, it binds directly to 16S rRNA where it nucleates assembly of the head domain of the 30S subunit. Is located at the subunit interface close to the decoding center, probably blocks exit of the E-site tRNA. This is Small ribosomal subunit protein uS7 from Tropheryma whipplei (strain TW08/27) (Whipple's bacillus).